The following is a 248-amino-acid chain: Ubiquinone biosynthesis O-methyltransferase (248 aa).

Positions 41, 72, 93, and 136 each coordinate S-adenosyl-L-methionine.

The protein belongs to the methyltransferase superfamily. UbiG/COQ3 family.

The catalysed reaction is a 3-demethylubiquinol + S-adenosyl-L-methionine = a ubiquinol + S-adenosyl-L-homocysteine + H(+). It carries out the reaction a 3-(all-trans-polyprenyl)benzene-1,2-diol + S-adenosyl-L-methionine = a 2-methoxy-6-(all-trans-polyprenyl)phenol + S-adenosyl-L-homocysteine + H(+). The protein operates within cofactor biosynthesis; ubiquinone biosynthesis. Functionally, O-methyltransferase that catalyzes the 2 O-methylation steps in the ubiquinone biosynthetic pathway. In Rhizobium etli (strain ATCC 51251 / DSM 11541 / JCM 21823 / NBRC 15573 / CFN 42), this protein is Ubiquinone biosynthesis O-methyltransferase.